A 360-amino-acid polypeptide reads, in one-letter code: uncharacterized protein (360 aa).

The disordered stretch occupies residues M1–R33.

Belongs to the herpesviridae US22 family.

This is an uncharacterized protein from Human cytomegalovirus (strain AD169) (HHV-5).